A 202-amino-acid chain; its full sequence is PITH domain-containing protein 1 (202 aa).

Residues 11–184 enclose the PITH domain; that stretch reads SHGVDDGIEY…IVNTVYESKP (174 aa).

The protein belongs to the PITHD1 family.

The chain is PITH domain-containing protein 1 from Dictyostelium discoideum (Social amoeba).